The primary structure comprises 350 residues: Phosphotriesterase-related protein (350 aa).

A divalent metal cation-binding residues include histidine 22, histidine 24, glutamate 169, histidine 201, histidine 230, and aspartate 298.

Belongs to the metallo-dependent hydrolases superfamily. Phosphotriesterase family. Requires a divalent metal cation as cofactor.

This Drosophila ananassae (Fruit fly) protein is Phosphotriesterase-related protein.